Reading from the N-terminus, the 510-residue chain is Bifunctional pantoate ligase/cytidylate kinase (510 aa).

The tract at residues 1 to 276 is pantoate--beta-alanine ligase; the sequence is MKKVIIRKTE…CGETRLIDHV (276 aa). 29 to 36 contacts ATP; the sequence is MGNLHDGH. Catalysis depends on histidine 36, which acts as the Proton donor. Glutamine 61 contributes to the (R)-pantoate binding site. Beta-alanine is bound at residue glutamine 61. ATP is bound at residue 150–153; the sequence is GEKD. Glutamine 156 contacts (R)-pantoate. 187-190 contributes to the ATP binding site; that stretch reads LSSR. Residues 277 to 510 are cytidylate kinase; the sequence is FLMKRRPIIA…DRIPKETEIK (234 aa).

In the N-terminal section; belongs to the pantothenate synthetase family. This sequence in the C-terminal section; belongs to the cytidylate kinase family. Type 1 subfamily.

The protein resides in the cytoplasm. The enzyme catalyses (R)-pantoate + beta-alanine + ATP = (R)-pantothenate + AMP + diphosphate + H(+). It catalyses the reaction CMP + ATP = CDP + ADP. The catalysed reaction is dCMP + ATP = dCDP + ADP. It functions in the pathway cofactor biosynthesis; (R)-pantothenate biosynthesis; (R)-pantothenate from (R)-pantoate and beta-alanine: step 1/1. Its function is as follows. Catalyzes the condensation of pantoate with beta-alanine in an ATP-dependent reaction via a pantoyl-adenylate intermediate. Functionally, catalyzes the transfer of a phosphate group from ATP to either CMP or dCMP to form CDP or dCDP and ADP, respectively. The protein is Bifunctional pantoate ligase/cytidylate kinase of Prochlorococcus marinus (strain MIT 9301).